The following is a 706-amino-acid chain: Triadin (706 aa).

Residues 1–28 (MTEITAEGNASTTTTVIDSKNGSVPKSP) form a disordered region. The Cytoplasmic segment spans residues 1-47 (MTEITAEGNASTTTTVIDSKNGSVPKSPGKVLKRTVTEDLVTTFSSP). The segment covering 8–24 (GNASTTTTVIDSKNGSV) has biased composition (polar residues). A helical membrane pass occupies residues 48–68 (AAWLLVIALIITWSAVAVVMF). Topologically, residues 69–706 (DLVDYKNFSA…GKPNSPGPKQ (638 aa)) are lumenal. An N-linked (GlcNAc...) asparagine glycan is attached at Asn-75. The segment covering 117–127 (DGDEEDDEGDE) has biased composition (acidic residues). Disordered stretches follow at residues 117-265 (DGDE…EQKD), 281-663 (DLKP…KKQK), and 684-706 (FPVT…GPKQ). Composition is skewed to basic and acidic residues over residues 128–254 (DTAK…ESKE), 309–358 (PEEK…KSPD), 372–432 (TKKD…KEEV), 443–518 (AKKE…EVKP), 525–552 (IKKE…EKVL), 570–588 (KKAE…DKPK), and 599–621 (ESGK…RESH). Asn-625 carries N-linked (GlcNAc...) asparagine glycosylation. The segment covering 628–651 (KAEKPARGSKEGFEDVPASKKAKE) has biased composition (basic and acidic residues).

In terms of assembly, interacts with CASQ2. Homooligomer of variable subunit number; disulfide-linked. Interacts with CASQ1 and RYR1 in skeletal muscle. Phosphorylated by CaMK2. Post-translationally, N-glycosylated. Detected in skeletal muscle and in heart (at protein level). Detected in skeletal muscle and in heart.

Its subcellular location is the sarcoplasmic reticulum membrane. Its function is as follows. Contributes to the regulation of lumenal Ca2+ release via the sarcoplasmic reticulum calcium release channels RYR1 and RYR2, a key step in triggering skeletal and heart muscle contraction. Required for normal organization of the triad junction, where T-tubules and the sarcoplasmic reticulum terminal cisternae are in close contact. Required for normal skeletal muscle strength. Plays a role in excitation-contraction coupling in the heart and in regulating the rate of heart beats. The chain is Triadin (TRDN) from Oryctolagus cuniculus (Rabbit).